We begin with the raw amino-acid sequence, 270 residues long: tRNA 2-(methylsulfanyl)-N(6)-isopentenyladenosine(37) hydroxylase (270 aa).

Fe cation-binding residues include glutamate 59, glutamate 137, histidine 140, glutamate 190, glutamate 219, and histidine 222.

It belongs to the MiaE family. In terms of assembly, monomer. The cofactor is Fe cation.

It carries out the reaction 2-methylsulfanyl-N(6)-dimethylallyladenosine(37) in tRNA + AH2 + O2 = N(6)-[(2E)-4-hydroxy-3-methylbut-2-en-1-yl]-2-(methylsulfanyl)adenosine(37) in tRNA + A + H2O. It functions in the pathway tRNA modification; 2-methylthio-N-6-(cis-hydroxy)isopentenyl adenosine-tRNA biosynthesis. Involved in specific tRNA modification. Catalyzes the oxygen-dependent hydroxylation of 2-methylthio-N-6-isopentenyl adenosine (ms2i6A) to produce 2-methylthio-N-6-(cis-hydroxy)isopentenyl adenosine (ms2io6A) at position 37 in tRNAs. Can also use N6-(dimethylallyl)adenosine (i6A) as substrate, with lower efficiency. The presence of the hydroxyl group on the tRNA may regulate the ability of S.typhimurium to grow on the citric acid cycle (CAC) intermediates succinate, fumarate and malate. The protein is tRNA 2-(methylsulfanyl)-N(6)-isopentenyladenosine(37) hydroxylase of Salmonella typhimurium (strain LT2 / SGSC1412 / ATCC 700720).